Reading from the N-terminus, the 301-residue chain is Putative S-adenosyl-L-methionine-dependent methyltransferase Mflv_5024 (301 aa).

S-adenosyl-L-methionine is bound by residues D129 and 158–159 (DL).

This sequence belongs to the UPF0677 family.

Exhibits S-adenosyl-L-methionine-dependent methyltransferase activity. The chain is Putative S-adenosyl-L-methionine-dependent methyltransferase Mflv_5024 from Mycolicibacterium gilvum (strain PYR-GCK) (Mycobacterium gilvum (strain PYR-GCK)).